A 125-amino-acid polypeptide reads, in one-letter code: MLPEPHRLRRHSDFSLTVRRGRRMGRRDLVVHAFDRAQADELVSSGGPRFGLVVSKAVGPAVIRHRVARRLRHICIDLVDSVPRGTDVVIRALPGAATASSRDLEKQLRAGLLRLDLLAPVSNST.

Belongs to the RnpA family. As to quaternary structure, consists of a catalytic RNA component (M1 or rnpB) and a protein subunit.

The enzyme catalyses Endonucleolytic cleavage of RNA, removing 5'-extranucleotides from tRNA precursor.. RNaseP catalyzes the removal of the 5'-leader sequence from pre-tRNA to produce the mature 5'-terminus. It can also cleave other RNA substrates such as 4.5S RNA. The protein component plays an auxiliary but essential role in vivo by binding to the 5'-leader sequence and broadening the substrate specificity of the ribozyme. This Rhodococcus opacus (strain B4) protein is Ribonuclease P protein component.